The primary structure comprises 192 residues: MAP6 domain-containing protein 1 (192 aa).

3 S-palmitoyl cysteine lipidation sites follow: cysteine 5, cysteine 10, and cysteine 11. The interval 36 to 106 is disordered; that stretch reads LESEEPIPGG…RTKPSATPGR (71 aa). A Phosphoserine modification is found at serine 38. Over residues 43–58 the composition is skewed to low complexity; sequence PGGVPSRRGPSPAGSR. Mn regions lie at residues 123-136 and 158-170; these read TTSY…WTGV and DGSP…APEV. Serine 160 carries the post-translational modification Phosphoserine.

The protein belongs to the STOP family. Interacts with calmodulin. Palmitoylated. Palmitoylation enhances association with microtubules.

It is found in the golgi apparatus. Its subcellular location is the cytoplasm. The protein resides in the cytoskeleton. May have microtubule-stabilizing activity. This chain is MAP6 domain-containing protein 1 (MAP6D1), found in Bos taurus (Bovine).